The primary structure comprises 64 residues: Large ribosomal subunit protein eL37 (64 aa).

Residues Cys-20, Cys-23, Cys-35, and Cys-38 each contribute to the Zn(2+) site. The C4-type zinc finger occupies 20–38 (CRRCGRRAYHVRKKACAAC).

Belongs to the eukaryotic ribosomal protein eL37 family. The cofactor is Zn(2+).

In terms of biological role, binds to the 23S rRNA. The sequence is that of Large ribosomal subunit protein eL37 from Methanococcus vannielii (strain ATCC 35089 / DSM 1224 / JCM 13029 / OCM 148 / SB).